The sequence spans 62 residues: uncharacterized protein (62 aa).

The segment at valine 38–methionine 62 is disordered.

This is an uncharacterized protein from Schizosaccharomyces pombe (strain 972 / ATCC 24843) (Fission yeast).